The following is a 537-amino-acid chain: Tyrosine-protein kinase Fyn (537 aa).

Glycine 2 is lipidated: N-myristoyl glycine. Residues cysteine 3 and cysteine 6 are each lipidated (S-palmitoyl cysteine). Residue threonine 12 is modified to Phosphothreonine; by PKC. 2 positions are modified to phosphoserine: serine 21 and serine 26. An SH3 domain is found at 82–143 (TGVTLFVALY…PSNYVAPVDS (62 aa)). The SH2 domain occupies 149–246 (WYFGKLGRKD…GLCCRLVVPC (98 aa)). Phosphotyrosine is present on tyrosine 185. The Protein kinase domain maps to 271–524 (LQLIKRLGNG…YLQGFLEDYF (254 aa)). Residues 277–285 (LGNGQFGEV) and lysine 299 contribute to the ATP site. Aspartate 390 (proton acceptor) is an active-site residue. Position 420 is a phosphotyrosine; by autocatalysis (tyrosine 420). The residue at position 531 (tyrosine 531) is a Phosphotyrosine; by CSK.

Belongs to the protein kinase superfamily. Tyr protein kinase family. SRC subfamily. As to quaternary structure, interacts (via its SH3 domain) with PIK3R1 and PRMT8. Interacts with FYB1, PAG1, and SH2D1A. Interacts with CD79A (tyrosine-phosphorylated form); the interaction increases FYN activity. Interacts (via SH2 domain) with CSF1R (tyrosine phosphorylated). Interacts with TOM1L1 (phosphorylated form). Interacts with KDR (tyrosine phosphorylated). Interacts (via SH3 domain) with KLHL2 (via N-terminus). Interacts with SH2D1A and SLAMF1. Interacts with ITCH; the interaction phosphorylates ITCH and negatively regulates its activity. Interacts with FASLG. Interacts with RUNX3. Interacts with KIT. Interacts with EPHA8; possible downstream effector of EPHA8 in regulation of cell adhesion. Interacts with PTK2/FAK1; this interaction leads to PTK2/FAK1 phosphorylation and activation. Interacts with CAV1; this interaction couples integrins to the Ras-ERK pathway. Interacts with UNC119. Interacts (via SH2 domain) with PTPRH (phosphorylated form). Interacts with PTPRO (phosphorylated form). Interacts with PTPRB (phosphorylated form). Interacts with FYB2. Interacts with DSCAM. Interacts with SKAP1 and FYB1; this interaction promotes the phosphorylation of CLNK. Interacts with NEDD9; in the presence of PTK2. Mn(2+) is required as a cofactor. Autophosphorylated at Tyr-420. Phosphorylation on the C-terminal tail at Tyr-531 by CSK maintains the enzyme in an inactive state. PTPRC/CD45 dephosphorylates Tyr-531 leading to activation. Ultraviolet B (UVB) strongly increase phosphorylation at Thr-12 and kinase activity, and promotes translocation from the cytoplasm to the nucleus. Dephosphorylation at Tyr-420 by PTPN2 negatively regulates T-cell receptor signaling. Phosphorylated at tyrosine residues, which can be enhanced by NTN1. In terms of processing, palmitoylated. Palmitoylation at Cys-3 and Cys-6, probably by ZDHHC21, regulates subcellular location.

It localises to the cytoplasm. Its subcellular location is the nucleus. The protein localises to the cell membrane. It is found in the perikaryon. It carries out the reaction L-tyrosyl-[protein] + ATP = O-phospho-L-tyrosyl-[protein] + ADP + H(+). With respect to regulation, inhibited by phosphorylation of Tyr-531 by leukocyte common antigen and activated by dephosphorylation of this site. In terms of biological role, non-receptor tyrosine-protein kinase that plays a role in many biological processes including regulation of cell growth and survival, cell adhesion, integrin-mediated signaling, cytoskeletal remodeling, cell motility, immune response and axon guidance. Inactive FYN is phosphorylated on its C-terminal tail within the catalytic domain. Following activation by PKA, the protein subsequently associates with PTK2/FAK1, allowing PTK2/FAK1 phosphorylation, activation and targeting to focal adhesions. Involved in the regulation of cell adhesion and motility through phosphorylation of CTNNB1 (beta-catenin) and CTNND1 (delta-catenin). Regulates cytoskeletal remodeling by phosphorylating several proteins including the actin regulator WAS and the microtubule-associated proteins MAP2 and MAPT. Promotes cell survival by phosphorylating AGAP2/PIKE-A and preventing its apoptotic cleavage. Participates in signal transduction pathways that regulate the integrity of the glomerular slit diaphragm (an essential part of the glomerular filter of the kidney) by phosphorylating several slit diaphragm components including NPHS1, KIRREL1 and TRPC6. Plays a role in neural processes by phosphorylating DPYSL2, a multifunctional adapter protein within the central nervous system, ARHGAP32, a regulator for Rho family GTPases implicated in various neural functions, and SNCA, a small pre-synaptic protein. Involved in reelin signaling by mediating phosphorylation of DAB1 following reelin (RELN)-binding to its receptor. Participates in the downstream signaling pathways that lead to T-cell differentiation and proliferation following T-cell receptor (TCR) stimulation. Phosphorylates PTK2B/PYK2 in response to T-cell receptor activation. Also participates in negative feedback regulation of TCR signaling through phosphorylation of PAG1, thereby promoting interaction between PAG1 and CSK and recruitment of CSK to lipid rafts. CSK maintains LCK and FYN in an inactive form. Promotes CD28-induced phosphorylation of VAV1. In mast cells, phosphorylates CLNK after activation of immunoglobulin epsilon receptor signaling. Can also promote CD244-mediated NK cell activation. The protein is Tyrosine-protein kinase Fyn of Sus scrofa (Pig).